The chain runs to 822 residues: MDINLDPSRDDLPLMANTSHLLVKHYVLDLDVDFGSRVLEGNIVLFFGDGNRCKKQSSSSQETFQMESEEAYILRTAEPCHVPKMDSNTFSPKMGHREFAVFGKSDQDAFDNDGNHDNKEHDSESSSSKYCCDTGNHGREDFLLVLDCCDLSVLKVEEVDVAAVPDLEKFTKAPNLTAAPEKRRCEIVRDLVALPADAWREQLDCYTRCSQAPGCGELLFDSDKWSLQIRKKGVPTAADFPHAIRIWYKTKPEGQSVTWTSDQDGRPCVYTMGSPINNRALFPCQEPPVAMSTWQATVRAAASFVVLMSGEKSAKPTPLREGYMSWHYYVTMPMPASTFTIAVGCWTEMKPKTSPLDDLTEHTLPLRPSDADFRYGNTCSHMEYPCRFQSASAATQNIIPYRVFAPVCLEGACREALLWLIPSCLSAAHSVLGTHPFSRLDILIVPTNFPSLGMASPHIIFLSQSTLTGTSHLCGTRLCHEIAHAWFGLAIGARDWTEEWLSEGFATHLEDIFWAEAQQLPPHEALEQQELRACLRWHRLQDELQNSPEGMQVLRPNKEKTGHVSASGASVVKNGLNPEKGFMQVHYLKGYFLLRFLARTLGEETYFPFLRKFVHLFHGQLILSQDFLQMLLESIPENKRFGLSVENIVGDWLECPGIPKALQEERKAKDCSPSRLVRQVGSEVAKWIRVNRRPGKRQRRKREAAFEKLSPDQIVLLLEWLLEQKTLSPQTLHRLQQTYHLQEQDAEVRHRWCELVIKHKYTKAYDQVKRFLQEDQAMGIYLYGELMVSEDARLQQLAHRCFELVKGHMDKASAQVVTEMLF.

H480 is a Zn(2+) binding site. The active-site Proton acceptor is E481. The Zn(2+) site is built by H484 and E503. The Nucleolar localization signal motif lies at 692 to 702 (RRPGKRQRRKR).

Belongs to the peptidase M1 family. Requires Zn(2+) as cofactor.

The protein resides in the nucleus. It is found in the nucleolus. Its function is as follows. Aminopeptidase which catalyzes the hydrolysis of amino acid residues from the N-terminus of peptide or protein substrates. The protein is Aminopeptidase O (Aopep) of Rattus norvegicus (Rat).